A 306-amino-acid polypeptide reads, in one-letter code: MDALSKIFDDIHLNKSEYLYVKTQGEWAFHMLAQDALIAHIILMGSAHFTLQDGTTQTAYSGDIVLIPSGQAHFVSNDAQNKLIDCSNIQSFFDGHRNDAIELGTTSSDHGLIFTVRSHIDMHMGSPLLNALPSLIHIHHAMSSTGPEWLRVGLYFVALETQRIQPGRDKIFDHLMSILFIECVRDHIAQLDDPKSWLTALMHPELSNALAAIHAYPEKPWTVESLADQCCMSRSKFATLFQSIVHETPLAYLQQHRLRLAVQLLKTSQLNIQQIANKVGYSSETAFSQAFKRQFEQSPKHYRQQS.

The region spanning 207–305 (SNALAAIHAY…EQSPKHYRQQ (99 aa)) is the HTH araC/xylS-type domain. DNA-binding regions (H-T-H motif) lie at residues 224–245 (ESLA…QSIV) and 272–295 (IQQI…KRQF).

It participates in hydrocarbon metabolism; alkane degradation. In terms of biological role, this protein activates the expression of the alkane 1-monooxygenase AlkM. The sequence is that of HTH-type transcriptional regulator AlkR (alkR) from Acinetobacter baylyi (strain ATCC 33305 / BD413 / ADP1).